We begin with the raw amino-acid sequence, 278 residues long: 1-acyl-sn-glycerol-3-phosphate acyltransferase beta (278 aa).

Residues 1–23 form the signal peptide; sequence MDPWPWLTAALLLLLLLVQLSRT. Topologically, residues 24-29 are lumenal; it reads ARFYAK. Residues 30 to 50 traverse the membrane as a helical segment; sequence VGLYCVLCLSFSAAASIVCLL. The Cytoplasmic segment spans residues 51–121; that stretch reads RHGGRTVDNM…PKRCVQIAKR (71 aa). The HXXXXD motif motif lies at 98 to 103; that stretch reads HQSILD. Residues 122–142 traverse the membrane as a helical segment; the sequence is ELMFTGPVGLIMYLGGVYFIN. The Lumenal portion of the chain corresponds to 143-278; sequence RQQARTAMSV…IKEPGVLPAQ (136 aa). An EGTR motif motif is present at residues 172–175; it reads EGTR.

This sequence belongs to the 1-acyl-sn-glycerol-3-phosphate acyltransferase family. As to expression, expressed at high levels in the liver, at intermediate levels in the kidney, gut, heart and skeletal muscles. Undetectable in brain and spleen.

The protein localises to the endoplasmic reticulum membrane. The enzyme catalyses a 1-acyl-sn-glycero-3-phosphate + an acyl-CoA = a 1,2-diacyl-sn-glycero-3-phosphate + CoA. It catalyses the reaction 1-(9Z-octadecenoyl)-sn-glycero-3-phosphate + (9Z)-octadecenoyl-CoA = 1,2-di-(9Z-octadecenoyl)-sn-glycero-3-phosphate + CoA. It carries out the reaction 1-(9Z-octadecenoyl)-sn-glycero-3-phosphate + hexadecanoyl-CoA = 1-(9Z)-octadecenoyl-2-hexadecanoyl-sn-glycero-3-phosphate + CoA. The catalysed reaction is heptadecanoyl-CoA + 1-(9Z-octadecenoyl)-sn-glycero-3-phosphate = 1-(9Z)-octadecenoyl-2-heptadecanoyl-sn-glycero-3-phosphate + CoA. The enzyme catalyses 1-(9Z-octadecenoyl)-sn-glycero-3-phosphate + (9Z,12Z)-octadecadienoyl-CoA = 1-(9Z)-octadecenoyl-2-(9Z,12Z)-octadecadienoyl-sn-glycero-3-phosphate + CoA. It catalyses the reaction 1-(9Z-octadecenoyl)-sn-glycero-3-phosphate + tetradecanoyl-CoA = 1-(9Z)-octadecenoyl-2-tetradecanoyl-sn-glycero-3-phosphate + CoA. It carries out the reaction pentadecanoyl-CoA + 1-(9Z-octadecenoyl)-sn-glycero-3-phosphate = 1-(9Z)-octadecenoyl-2-pentadecanoyl-sn-glycero-3-phosphate + CoA. The catalysed reaction is 1-hexadecanoyl-sn-glycero-3-phosphate + (9Z)-octadecenoyl-CoA = 1-hexadecanoyl-2-(9Z-octadecenoyl)-sn-glycero-3-phosphate + CoA. The enzyme catalyses 1-tetradecanoyl-sn-glycerol 3-phosphate + (9Z)-octadecenoyl-CoA = 1-tetradecanoyl-2-(9Z)-octadecenoyl-sn-glycero-3-phosphate + CoA. It catalyses the reaction 1-(9Z,12Z,15Z)-octadecatrienoyl-sn-glycero-3-phosphate + (9Z)-octadecenoyl-CoA = 1-(9Z,12Z,15Z)-octadecatrienoyl-2-(9Z)-octadecenoyl-sn-glycero-3-phosphate + CoA. It carries out the reaction 1-(6Z,9Z,12Z-octadecatrienoyl)-sn-glycero-3-phosphate + (9Z)-octadecenoyl-CoA = (6Z,9Z,12Z)-octadecatrienoyl-2-(9Z)-octadecenoyl-sn-glycero-3-phosphate + CoA. The catalysed reaction is 1-eicosanoyl-sn-glycero-3-phosphate + (9Z)-octadecenoyl-CoA = 1-eicosanoyl-2-(9Z)-octadecenoyl-sn-glycero-3-phosphate + CoA. The enzyme catalyses 1-hexadecanoyl-sn-glycero-3-phosphate + octadecanoyl-CoA = 1-hexadecanoyl-2-octadecanoyl-sn-glycero-3-phosphate + CoA. It catalyses the reaction 1-hexadecanoyl-sn-glycero-3-phosphate + (5Z,8Z,11Z,14Z)-eicosatetraenoyl-CoA = 1-hexadecanoyl-2-(5Z,8Z,11Z,14Z-eicosatetraenoyl)-sn-glycero-3-phosphate + CoA. It carries out the reaction 1-hexadecanoyl-sn-glycero-3-phosphate + hexadecanoyl-CoA = 1,2-dihexadecanoyl-sn-glycero-3-phosphate + CoA. The catalysed reaction is 1-hexadecanoyl-sn-glycero-3-phosphate + tetradecanoyl-CoA = 1-hexadecanoyl-2-tetradecanoyl-sn-glycero-3-phosphate + CoA. The enzyme catalyses (11Z)-octadecenoyl-CoA + 1-(9Z-octadecenoyl)-sn-glycero-3-phosphate = 1-(9Z)-octadecenoyl-2-(11Z)-octadecenoyl-sn-glycero-3-phosphate + CoA. It functions in the pathway phospholipid metabolism; CDP-diacylglycerol biosynthesis; CDP-diacylglycerol from sn-glycerol 3-phosphate: step 2/3. Converts 1-acyl-sn-glycerol-3-phosphate (lysophosphatidic acid or LPA) into 1,2-diacyl-sn-glycerol-3-phosphate (phosphatidic acid or PA) by incorporating an acyl moiety at the sn-2 position of the glycerol backbone. The sequence is that of 1-acyl-sn-glycerol-3-phosphate acyltransferase beta (Agpat2) from Mus musculus (Mouse).